Consider the following 348-residue polypeptide: Dihydroorotase (348 aa).

Zn(2+) contacts are provided by histidine 13 and histidine 15. Residues 15-17 (HLR) and asparagine 41 each bind substrate. Positions 99, 136, and 174 each coordinate Zn(2+). At lysine 99 the chain carries N6-carboxylysine. Histidine 136 contributes to the substrate binding site. Residue leucine 219 coordinates substrate. Aspartate 247 contributes to the Zn(2+) binding site. The active site involves aspartate 247. Substrate-binding residues include histidine 251 and alanine 263.

Belongs to the metallo-dependent hydrolases superfamily. DHOase family. Class II DHOase subfamily. Homodimer. It depends on Zn(2+) as a cofactor.

It catalyses the reaction (S)-dihydroorotate + H2O = N-carbamoyl-L-aspartate + H(+). It participates in pyrimidine metabolism; UMP biosynthesis via de novo pathway; (S)-dihydroorotate from bicarbonate: step 3/3. Functionally, catalyzes the reversible cyclization of carbamoyl aspartate to dihydroorotate. This is Dihydroorotase from Coxiella burnetii (strain RSA 331 / Henzerling II).